Consider the following 784-residue polypeptide: Cyclin-dependent kinase 11B (784 aa).

Over residues 18–60 the composition is skewed to basic and acidic residues; that stretch reads QEKKRRKEQEEKAEIKRLKNSDDRDSKRDSLEEGELRDHRMEI. Residues 18–401 are disordered; the sequence is QEKKRRKEQE…EGDYVPDSPA (384 aa). Ser-47 and Ser-72 each carry phosphoserine. Positions 95 to 113 are enriched in basic residues; that stretch reads EKAHHRKDEKRKEKRRHRS. 3 stretches are compositionally biased toward basic and acidic residues: residues 114–131, 138–227, and 238–263; these read HSAE…EREH, REEQ…DKGK, and PPRE…RDLL. Ser-115 carries the phosphoserine modification. At Ser-270 the chain carries Phosphoserine. Residues 278 to 289 show a composition bias toward low complexity; that stretch reads SAESSSAESGSG. Acidic residues-rich tracts occupy residues 290-353 and 372-381; these read SEEE…EDRE and DSEEGEEEVG. The Protein kinase domain occupies 427-712; it reads FQCLNRIEEG…AEDGLKHEYF (286 aa). Residues 433-441 and Lys-456 contribute to the ATP site; that span reads IEEGTYGVV. Ser-471 carries the phosphoserine; by CDK7 modification. Thr-477 is subject to Phosphothreonine; by CDK7. Residue Asp-551 is the Proton acceptor of the active site. At Ser-578 the chain carries Phosphoserine. At Tyr-583 the chain carries Phosphotyrosine. Thr-584 is subject to Phosphothreonine. A Glycyl lysine isopeptide (Lys-Gly) (interchain with G-Cter in SUMO2) cross-link involves residue Lys-630. The interval 722–784 is disordered; the sequence is SMFPTWPAKS…AAGPGFSLKF (63 aa). Thr-740 is modified (phosphothreonine). A Phosphoserine modification is found at Ser-741.

It belongs to the protein kinase superfamily. CMGC Ser/Thr protein kinase family. CDC2/CDKX subfamily. In terms of assembly, may interact PAK1 and RANBP9. p110C interacts with RNPS1. Interacts with CCND3. Interacts with CCNL1 and CCNL2. Forms complexes with pre-mRNA-splicing factors, including at least SRSF1, SRSF2 AND SRSF7/SLU7. Mg(2+) serves as cofactor. Phosphorylation at Ser-115 creates a binding site for 14-3-3 proteins.

It catalyses the reaction L-seryl-[protein] + ATP = O-phospho-L-seryl-[protein] + ADP + H(+). The enzyme catalyses L-threonyl-[protein] + ATP = O-phospho-L-threonyl-[protein] + ADP + H(+). Phosphorylation at Thr-437 or Tyr-438 inactivates the enzyme, while phosphorylation at Thr-584 activates it. Functionally, plays multiple roles in cell cycle progression, cytokinesis and apoptosis. Involved in pre-mRNA splicing in a kinase activity-dependent manner. May act as a negative regulator of normal cell cycle progression. This is Cyclin-dependent kinase 11B (Cdk11b) from Mus musculus (Mouse).